Consider the following 685-residue polypeptide: Protein snwA (685 aa).

Disordered stretches follow at residues 1 to 62 (MTSL…GYLP), 88 to 112 (RKGK…TSIV), 347 to 573 (LAED…DSIY), and 605 to 685 (AVSN…SKKR). Low complexity-rich tracts occupy residues 30–41 (PQQQKQQQQQQQ) and 93–102 (KSSNSNTSNM). The interval 194-360 (ATYIKYTPSN…VRNERSGIIQ (167 aa)) is SNW. The span at 370-381 (DSDNDNDNDSSS) shows a compositional bias: acidic residues. Over residues 399 to 494 (RSTERIPSRN…DRYSKRRSDS (96 aa)) the composition is skewed to basic and acidic residues. Positions 495 to 507 (DSDSDSDSSDSED) are enriched in acidic residues. The span at 508 to 556 (ERVRRERKEKLERDKIRMEKKRELEREYRLEASGKKSKFNRDQDRDISE) shows a compositional bias: basic and acidic residues. The span at 618-631 (EDNTSIQDVLSNSR) shows a compositional bias: polar residues. Residues 646–685 (PNKEFSGTDRSKDRTGPVAFEKEKKKSDDPFGFDDFSKKR) show a composition bias toward basic and acidic residues.

The protein belongs to the SNW family. As to quaternary structure, interacts with cypE.

Its subcellular location is the nucleus. In Dictyostelium discoideum (Social amoeba), this protein is Protein snwA (snwA).